Reading from the N-terminus, the 231-residue chain is NADH-quinone oxidoreductase subunit C (231 aa).

This sequence belongs to the complex I 30 kDa subunit family. In terms of assembly, NDH-1 is composed of 14 different subunits. Subunits NuoB, C, D, E, F, and G constitute the peripheral sector of the complex.

It localises to the cell membrane. The enzyme catalyses a quinone + NADH + 5 H(+)(in) = a quinol + NAD(+) + 4 H(+)(out). In terms of biological role, NDH-1 shuttles electrons from NADH, via FMN and iron-sulfur (Fe-S) centers, to quinones in the respiratory chain. The immediate electron acceptor for the enzyme in this species is believed to be a menaquinone. Couples the redox reaction to proton translocation (for every two electrons transferred, four hydrogen ions are translocated across the cytoplasmic membrane), and thus conserves the redox energy in a proton gradient. This Mycobacterium sp. (strain JLS) protein is NADH-quinone oxidoreductase subunit C.